A 754-amino-acid chain; its full sequence is MTTAGRGNLGLIPRSTAFQKQEGRLTVKQEPANQTWGQGSSLQKNYPPVCEIFRLHFRQLCYHEMSGPQEALSRLRELCRWWLMPEVHTKEQILELLVLEQFLSILPGELRTWVQLHHPESGEEAVAVVEDFQRHLSGSEEVSAPAQKQEMHFEETTALGTTKESPPTSPLSGGSAPGAHLEPPYDPGTHHLPSGDFAQCTSPVPTLPQVGNSGDQAGATVLRMVRPQDTVAYEDLSVDYTQKKWKSLTLSQRALQWNMMPENHHSMASLAGENMMKGSELTPKQEFFKGSESSNRTSGGLFGVVPGAAETGDVCEDTFKELEGQTSDEEGSRLENDFLEITDEDKKKSTKDRYDKYKEVGEHPPLSSSPVEHEGVLKGQKSYRCDECGKAFNRSSHLIGHQRIHTGEKPYECNECGKTFRQTSQLIVHLRTHTGEKPYECSECGKAYRHSSHLIQHQRLHNGEKPYKCNECAKAFTQSSRLTDHQRTHTGEKPYECNECGEAFIRSKSLARHQVLHTGKKPYKCNECGRAFCSNRNLIDHQRIHTGEKPYECSECGKAFSRSKCLIRHQSLHTGEKPYKCSECGKAFNQNSQLIEHERIHTGEKPFECSECGKAFGLSKCLIRHQRLHTGEKPYKCNECGKSFNQNSHLIIHQRIHTGEKPYECNECGKVFSYSSSLMVHQRTHTGEKPYKCNDCGKAFSDSSQLIVHQRVHTGEKPYECSECGKAFSQRSTFNHHQRTHTGEKSSGLAWSVS.

Residue K28 forms a Glycyl lysine isopeptide (Lys-Gly) (interchain with G-Cter in SUMO2) linkage. The 83-residue stretch at 54–136 (RLHFRQLCYH…AVVEDFQRHL (83 aa)) folds into the SCAN box domain. Residues 157 to 215 (TALGTTKESPPTSPLSGGSAPGAHLEPPYDPGTHHLPSGDFAQCTSPVPTLPQVGNSGD) are disordered. Composition is skewed to polar residues over residues 158 to 172 (ALGTTKESPPTSPLS) and 199 to 215 (QCTSPVPTLPQVGNSGD). One can recognise a KRAB domain in the interval 231-306 (VAYEDLSVDY…TSGGLFGVVP (76 aa)). C2H2-type zinc fingers lie at residues 383–405 (YRCDECGKAFNRSSHLIGHQRIH), 411–433 (YECNECGKTFRQTSQLIVHLRTH), 439–461 (YECSECGKAYRHSSHLIQHQRLH), 467–489 (YKCNECAKAFTQSSRLTDHQRTH), 495–517 (YECNECGEAFIRSKSLARHQVLH), 523–545 (YKCNECGRAFCSNRNLIDHQRIH), 551–573 (YECSECGKAFSRSKCLIRHQSLH), 579–601 (YKCSECGKAFNQNSQLIEHERIH), 607–629 (FECSECGKAFGLSKCLIRHQRLH), and 635–657 (YKCNECGKSFNQNSHLIIHQRIH). The C2H2-type 11; degenerate zinc finger occupies 663 to 685 (YECNECGKVFSYSSSLMVHQRTH). 2 consecutive C2H2-type zinc fingers follow at residues 691 to 713 (YKCNDCGKAFSDSSQLIVHQRVH) and 719 to 741 (YECSECGKAFSQRSTFNHHQRTH). The interval 735–754 (NHHQRTHTGEKSSGLAWSVS) is disordered.

The protein belongs to the krueppel C2H2-type zinc-finger protein family.

It localises to the nucleus. May be involved in transcriptional regulation. This is Zinc finger protein with KRAB and SCAN domains 7 (ZKSCAN7) from Homo sapiens (Human).